The following is a 260-amino-acid chain: tRNA pseudouridine synthase A (260 aa).

Aspartate 52 functions as the Nucleophile in the catalytic mechanism. A substrate-binding site is contributed by tyrosine 110.

The protein belongs to the tRNA pseudouridine synthase TruA family. As to quaternary structure, homodimer.

The enzyme catalyses uridine(38/39/40) in tRNA = pseudouridine(38/39/40) in tRNA. Its function is as follows. Formation of pseudouridine at positions 38, 39 and 40 in the anticodon stem and loop of transfer RNAs. In Thiobacillus denitrificans (strain ATCC 25259 / T1), this protein is tRNA pseudouridine synthase A.